The primary structure comprises 2803 residues: Microtubule-associated protein 1A (2803 aa).

Phosphoserine occurs at positions 114, 117, 118, 121, and 155. Position 177 is a phosphotyrosine (Y177). Disordered stretches follow at residues 302-466 and 486-516; these read GAVP…DLKP and IDRS…PLPT. 3 positions are modified to phosphoserine: S319, S322, and S384. The segment covering 335-390 has biased composition (basic and acidic residues); that stretch reads AKREEVVEEGAKEARSELAKELAKTEKKAKESSEKPPEKPAKPERVKTESSEALKA. Basic residues predominate over residues 391 to 406; the sequence is EKRKLIKDKVGKKHLK. Composition is skewed to basic and acidic residues over residues 407 to 464 and 486 to 499; these read EKIS…KPDL and IDRS…KELS. 8 repeat units span residues 415 to 417, 420 to 422, 427 to 429, 431 to 433, 436 to 438, 440 to 442, 444 to 446, and 449 to 451. The segment at 415–541 is 9 X 3 AA repeats of K-K-[DE]; the sequence is KKDKEKKEIK…TQDFEEMKRE (127 aa). T504 bears the Phosphothreonine mark. S526 and S527 each carry phosphoserine. Residues 539-541 form repeat 9; the sequence is KRE. 2 stretches are compositionally biased toward basic and acidic residues: residues 539–554 and 585–596; these read KREE…DTGL and QEEHVMKEKELV. Disordered stretches follow at residues 539–712, 734–806, 847–1080, 1109–1548, and 1573–1605; these read KREE…KAPE, YIQD…GTPE, EDQS…VNID, TGPI…EKKD, and EENH…EKVK. 2 positions are modified to phosphoserine: S605 and S612. T616 carries the phosphothreonine modification. Positions 623 to 667 are enriched in basic and acidic residues; it reads WEEKKQREAERLPDRTEAREESEPEVKEDVIEKAELEEMEEVHPS. S644, S667, and S787 each carry phosphoserine. Composition is skewed to polar residues over residues 847–860 and 871–883; these read EDQS…PQTE and TVTS…TEAT. Residues S874, S877, S878, and S891 each carry the phosphoserine modification. T894 is modified (phosphothreonine). Phosphoserine is present on residues S896, S900, S909, S986, S996, S1004, S1013, S1019, and S1029. Positions 1031 to 1065 are enriched in basic and acidic residues; sequence GDTKRTPGVGKEDAAEETVKPGPEEGTLEKEEKVP. Phosphoserine is present on residues S1069, S1144, S1146, S1160, S1172, S1190, S1200, S1203, S1209, S1218, S1221, and S1264. A compositionally biased stretch (basic and acidic residues) spans 1131–1146; the sequence is KPQKDEVLRYPDRSLS. The segment covering 1154–1169 has biased composition (polar residues); that stretch reads SVLSVPSPDTANQEPT. Polar residues-rich tracts occupy residues 1211 to 1224 and 1264 to 1278; these read DVSS…SLGT and SPPT…AQTD. Low complexity predominate over residues 1289 to 1299; the sequence is PASSFSHSTPS. S1326, S1329, S1544, S1600, and S1626 each carry phosphoserine. Basic and acidic residues-rich tracts occupy residues 1338–1548 and 1586–1605; these read IAIK…EKKD and QEDK…EKVK. Basic and acidic residues predominate over residues 1632 to 1642; it reads RAREQEEKYWR. 3 disordered regions span residues 1632–1684, 1713–1879, and 1892–2673; these read RARE…RYWR, DGQG…FSWG, and EGAA…LVNG. S1654 bears the Phosphoserine mark. Over residues 1655 to 1666 the composition is skewed to basic and acidic residues; that stretch reads PTREEPAGEQKE. S1675, S1749, S1762, S1776, S1791, S1797, S1801, S1812, and S1818 each carry phosphoserine. Pro residues predominate over residues 1852 to 1867; that stretch reads LPPAPLSPAPGPPTPA. Positions 1907–1929 are enriched in basic and acidic residues; the sequence is KDYRKAEGEREEEGRAEAPDKSS. Position 1931 is a phosphoserine (S1931). Residues 1951 to 1964 are compositionally biased toward basic and acidic residues; that stretch reads PEQREPTPYPDERS. T1957 carries the post-translational modification Phosphothreonine. The span at 2019–2033 shows a compositional bias: polar residues; that stretch reads SPISPKSLQSDTPTF. A Phosphoserine modification is found at S2022. Residues 2042–2066 show a composition bias toward pro residues; it reads TVPPRPEPGPSMEPSLTPPAVPPRA. T2058 carries the post-translational modification Phosphothreonine. 4 positions are modified to phosphoserine: S2074, S2104, S2106, and S2108. Residues 2086 to 2122 are compositionally biased toward basic and acidic residues; it reads PDRRSPSPKESGRSHWDDSTSDSELEKGAREQPEKEA. Over residues 2175 to 2184 the composition is skewed to pro residues; sequence PAPPQLPSPA. 5 positions are modified to phosphoserine: S2235, S2252, S2256, S2259, and S2260. A compositionally biased stretch (polar residues) spans 2257–2268; that stretch reads EGSSSEATTPVI. The span at 2312-2325 shows a compositional bias: low complexity; that stretch reads ASLDLALAPAPSLP. A Phosphoserine modification is found at S2449. The span at 2461 to 2473 shows a compositional bias: basic and acidic residues; it reads IDDRDLSTEEVRL. Over residues 2502–2514 the composition is skewed to low complexity; the sequence is SASDSGSSQSDSD. The segment covering 2559 to 2575 has biased composition (pro residues); that stretch reads DPPPLPQPDPRPSPPRP. A compositionally biased stretch (basic and acidic residues) spans 2590–2602; sequence GRVERLREKEKVQ. S2649 and S2664 each carry phosphoserine.

Belongs to the MAP1 family. In terms of assembly, 3 different light chains, LC1 (a cleavage product of MAP1B), LC2 (a cleavage product of MAP1A) and LC3 (produced by one of the MAP1LC3 genes), can associate with the MAP1A or MAP1B heavy chains. Interacts with TIAM2. Interacts with guanylate kinase-like domain of DLG1, DLG2 and DLG4. Binds to CSNK1D. Interacts with ELAVL4. In terms of processing, phosphorylated by CSNK1D. Post-translationally, LC2 is generated from MAP1A by proteolytic processing. Brain.

The protein localises to the cytoplasm. It localises to the cytoskeleton. Functionally, structural protein involved in the filamentous cross-bridging between microtubules and other skeletal elements. In Homo sapiens (Human), this protein is Microtubule-associated protein 1A (MAP1A).